A 665-amino-acid chain; its full sequence is Kinesin-like protein KIF22 (665 aa).

The 326-residue stretch at 43–368 (RVRVAVRLRP…LNFAARSKEV (326 aa)) folds into the Kinesin motor domain. 127–134 (GPTGAGKT) contributes to the ATP binding site. A disordered region spans residues 379–428 (QPHALGPVKLSQKELLGPPEAKRARGPEEEEIGSPEPMAAPASASQKLSP). Phosphoserine occurs at positions 412, 427, and 452. Residues 412–428 (SPEPMAAPASASQKLSP) show a composition bias toward low complexity. Lysine 465 participates in a covalent cross-link: Glycyl lysine isopeptide (Lys-Gly) (interchain with G-Cter in SUMO2). Residues 465–508 (KRERMVLMKTVEEKDLEIERLKTKQKELEAKMLAQKAEEKENHC) are a coiled coil. Residues serine 543, serine 562, and serine 581 each carry the phosphoserine modification.

Belongs to the TRAFAC class myosin-kinesin ATPase superfamily. Kinesin family. In terms of assembly, interacts with FAM83D. Interacts with SIAH1. Ubiquitinated; mediated by SIAH1 and leading to its subsequent proteasomal degradation. As to expression, expressed in bone, cartilage, joint capsule, ligament, skin, and primary cultured chondrocytes.

It localises to the nucleus. It is found in the cytoplasm. The protein localises to the cytoskeleton. Kinesin family member that is involved in spindle formation and the movements of chromosomes during mitosis and meiosis. Binds to microtubules and to DNA. Plays a role in congression of laterally attached chromosomes in NDC80-depleted cells. The chain is Kinesin-like protein KIF22 (KIF22) from Homo sapiens (Human).